Reading from the N-terminus, the 215-residue chain is Large ribosomal subunit protein bL25 (215 aa).

Positions 170–215 (DPDTSVASVTPPTTEEDLDTDDVDENAEPELVGAENDSADEESENK) are disordered. Composition is skewed to acidic residues over residues 183 to 197 (TEED…ENAE) and 206 to 215 (DSADEESENK).

The protein belongs to the bacterial ribosomal protein bL25 family. CTC subfamily. Part of the 50S ribosomal subunit; part of the 5S rRNA/L5/L18/L25 subcomplex. Contacts the 5S rRNA. Binds to the 5S rRNA independently of L5 and L18.

In terms of biological role, this is one of the proteins that binds to the 5S RNA in the ribosome where it forms part of the central protuberance. The chain is Large ribosomal subunit protein bL25 from Oceanobacillus iheyensis (strain DSM 14371 / CIP 107618 / JCM 11309 / KCTC 3954 / HTE831).